The following is a 498-amino-acid chain: Transcription factor bHLH78 (498 aa).

Disordered stretches follow at residues 1–24 (MDNELFMNTEFPPPPEMATHFEHQ) and 207–297 (LVSP…PPKD). Over residues 233-246 (NPISTASPSPSFSK) the composition is skewed to polar residues. The span at 259–270 (SSEEKGGKRRRE) shows a compositional bias: basic and acidic residues. The span at 271-281 (EEDDEEEEGEG) shows a compositional bias: acidic residues. One can recognise a bHLH domain in the interval 307–357 (QATDSHSLAERVRREKIGERMKLLQDLVPGCNKVTGKALMLDEIINYVQSL).

Homodimer. Binds reversibly to CRY2 after blue light illumination. As to expression, expressed constitutively in roots, leaves, stems, and flowers.

Its subcellular location is the nucleus. Its function is as follows. Transcription factor that binds DNA to G box 5'-CACGTG-3' and to E-box 5'-CANNTG-3'. Binds to chromatin DNA of the FT gene and promotes its expression, and thus triggers flowering in response to blue light. The polypeptide is Transcription factor bHLH78 (BHLH78) (Arabidopsis thaliana (Mouse-ear cress)).